A 545-amino-acid polypeptide reads, in one-letter code: Threonine--tRNA ligase catalytic subunit (545 aa).

A catalytic region spans residues 139–433 (DHRLIGEKLD…LLEHFKGKLP (295 aa)). Cysteine 231, histidine 282, and histidine 410 together coordinate Zn(2+).

Belongs to the class-II aminoacyl-tRNA synthetase family. As to quaternary structure, homodimer. Probably interacts with its editing subunit. The cofactor is Zn(2+).

Its subcellular location is the cytoplasm. The catalysed reaction is tRNA(Thr) + L-threonine + ATP = L-threonyl-tRNA(Thr) + AMP + diphosphate + H(+). Catalyzes the attachment of threonine to tRNA(Thr) in a two-step reaction: L-threonine is first activated by ATP to form Thr-AMP and then transferred to the acceptor end of tRNA(Thr). Also activates L-serine and transfers it to tRNA(Thr) but cannot deacylate incorrectly charged amino acid; unlike most archaea the editing function is found in a freestanding protein. The protein is Threonine--tRNA ligase catalytic subunit of Saccharolobus islandicus (strain M.16.4 / Kamchatka #3) (Sulfolobus islandicus).